The following is a 298-amino-acid chain: Protoheme IX farnesyltransferase (298 aa).

The next 9 membrane-spanning stretches (helical) occupy residues 24-44 (VIQLIVFCALIGMVLAVPGLP), 49-69 (LQLALLACLGIWLVAGAAAAF), 100-120 (LLFSAVLCAAGSILLYFWVNP), 121-141 (LTMWLTFATFIGYAVVYTVIL), 149-169 (IVIGGASGAMPPVLGWAAMAG), 175-195 (ALILFLIIFLWTPPHFWALAL), 220-240 (LMVLLYTFILFAACLMPYVYG), 244-264 (WLYLIAAVVLNLGFCLYAFYL), and 277-297 (FRFSLIHLSLLFAALLLDHYL).

Belongs to the UbiA prenyltransferase family. Protoheme IX farnesyltransferase subfamily.

It localises to the cell inner membrane. It carries out the reaction heme b + (2E,6E)-farnesyl diphosphate + H2O = Fe(II)-heme o + diphosphate. The protein operates within porphyrin-containing compound metabolism; heme O biosynthesis; heme O from protoheme: step 1/1. Converts heme B (protoheme IX) to heme O by substitution of the vinyl group on carbon 2 of heme B porphyrin ring with a hydroxyethyl farnesyl side group. The protein is Protoheme IX farnesyltransferase of Albidiferax ferrireducens (strain ATCC BAA-621 / DSM 15236 / T118) (Rhodoferax ferrireducens).